We begin with the raw amino-acid sequence, 155 residues long: Small ribosomal subunit protein uS7c (155 aa).

This sequence belongs to the universal ribosomal protein uS7 family. As to quaternary structure, part of the 30S ribosomal subunit.

It is found in the plastid. The protein resides in the chloroplast. Functionally, one of the primary rRNA binding proteins, it binds directly to 16S rRNA where it nucleates assembly of the head domain of the 30S subunit. This Dioscorea bulbifera (Air potato) protein is Small ribosomal subunit protein uS7c (rps7).